The sequence spans 350 residues: Ribosomal RNA large subunit methyltransferase M (350 aa).

Residues serine 184, 217–220 (APGG), aspartate 236, aspartate 256, and aspartate 272 contribute to the S-adenosyl-L-methionine site. Residue lysine 301 is the Proton acceptor of the active site.

Belongs to the class I-like SAM-binding methyltransferase superfamily. RNA methyltransferase RlmE family. RlmM subfamily. Monomer.

It is found in the cytoplasm. It catalyses the reaction cytidine(2498) in 23S rRNA + S-adenosyl-L-methionine = 2'-O-methylcytidine(2498) in 23S rRNA + S-adenosyl-L-homocysteine + H(+). Its function is as follows. Catalyzes the 2'-O-methylation at nucleotide C2498 in 23S rRNA. The sequence is that of Ribosomal RNA large subunit methyltransferase M from Marinomonas sp. (strain MWYL1).